A 201-amino-acid chain; its full sequence is Small ribosomal subunit protein uS4 (201 aa).

The S4 RNA-binding domain maps to 91–151 (SRLDNVVYRA…EKSQKMNWFE (61 aa)).

Belongs to the universal ribosomal protein uS4 family. Part of the 30S ribosomal subunit. Contacts protein S5. The interaction surface between S4 and S5 is involved in control of translational fidelity.

In terms of biological role, one of the primary rRNA binding proteins, it binds directly to 16S rRNA where it nucleates assembly of the body of the 30S subunit. With S5 and S12 plays an important role in translational accuracy. This chain is Small ribosomal subunit protein uS4, found in Corynebacterium glutamicum (strain ATCC 13032 / DSM 20300 / JCM 1318 / BCRC 11384 / CCUG 27702 / LMG 3730 / NBRC 12168 / NCIMB 10025 / NRRL B-2784 / 534).